The sequence spans 319 residues: Acetyl-coenzyme A carboxylase carboxyl transferase subunit alpha (319 aa).

Residues 35–296 (NIDEEVQRLR…KTQLLADLED (262 aa)) form the CoA carboxyltransferase C-terminal domain.

This sequence belongs to the AccA family. In terms of assembly, acetyl-CoA carboxylase is a heterohexamer composed of biotin carboxyl carrier protein (AccB), biotin carboxylase (AccC) and two subunits each of ACCase subunit alpha (AccA) and ACCase subunit beta (AccD).

Its subcellular location is the cytoplasm. The catalysed reaction is N(6)-carboxybiotinyl-L-lysyl-[protein] + acetyl-CoA = N(6)-biotinyl-L-lysyl-[protein] + malonyl-CoA. It functions in the pathway lipid metabolism; malonyl-CoA biosynthesis; malonyl-CoA from acetyl-CoA: step 1/1. Functionally, component of the acetyl coenzyme A carboxylase (ACC) complex. First, biotin carboxylase catalyzes the carboxylation of biotin on its carrier protein (BCCP) and then the CO(2) group is transferred by the carboxyltransferase to acetyl-CoA to form malonyl-CoA. This is Acetyl-coenzyme A carboxylase carboxyl transferase subunit alpha from Edwardsiella ictaluri (strain 93-146).